The sequence spans 328 residues: Beta-ketoacyl-[acyl-carrier-protein] synthase III (328 aa).

Residues Cys122 and His255 contribute to the active site. The ACP-binding stretch occupies residues 256–260; it reads QANVR. Asn285 is an active-site residue.

It belongs to the thiolase-like superfamily. FabH family. Homodimer.

The protein localises to the cytoplasm. The enzyme catalyses malonyl-[ACP] + acetyl-CoA + H(+) = 3-oxobutanoyl-[ACP] + CO2 + CoA. It functions in the pathway lipid metabolism; fatty acid biosynthesis. Catalyzes the condensation reaction of fatty acid synthesis by the addition to an acyl acceptor of two carbons from malonyl-ACP. Catalyzes the first condensation reaction which initiates fatty acid synthesis and may therefore play a role in governing the total rate of fatty acid production. Possesses both acetoacetyl-ACP synthase and acetyl transacylase activities. Its substrate specificity determines the biosynthesis of branched-chain and/or straight-chain of fatty acids. The protein is Beta-ketoacyl-[acyl-carrier-protein] synthase III of Bordetella avium (strain 197N).